Consider the following 102-residue polypeptide: Small ribosomal subunit protein uS10 (102 aa).

Belongs to the universal ribosomal protein uS10 family. As to quaternary structure, part of the 30S ribosomal subunit.

Functionally, involved in the binding of tRNA to the ribosomes. This is Small ribosomal subunit protein uS10 from Tropheryma whipplei (strain TW08/27) (Whipple's bacillus).